Consider the following 297-residue polypeptide: uncharacterized protein (297 aa).

Residues 1–29 (MAESKAKNMFQKLSLTPKRNHEHDAGRNI) are disordered. The span at 19 to 29 (RNHEHDAGRNI) shows a compositional bias: basic and acidic residues.

This is an uncharacterized protein from Caenorhabditis elegans.